Here is a 248-residue protein sequence, read N- to C-terminus: UPF0328 protein ECU06_0030/ECU06_1690/ECU11_0020 (248 aa).

Disordered regions lie at residues 1 to 34 (MVRH…HPSR) and 51 to 81 (ASAE…ILPD). Composition is skewed to polar residues over residues 10–19 (PKTTNPNPES) and 61–76 (QNLS…THQS).

This sequence belongs to the UPF0328 family.

The sequence is that of UPF0328 protein ECU06_0030/ECU06_1690/ECU11_0020 from Encephalitozoon cuniculi (strain GB-M1) (Microsporidian parasite).